We begin with the raw amino-acid sequence, 517 residues long: Aldehyde dehydrogenase X, mitochondrial (517 aa).

The N-terminal 17 residues, 1 to 17, are a transit peptide targeting the mitochondrion; the sequence is MLRFLAPRLLSLQGRTA. Lys51 bears the N6-acetyllysine mark. Lys52 is subject to N6-acetyllysine; alternate. Lys52 carries the post-translational modification N6-succinyllysine; alternate. Lys81 is modified (N6-succinyllysine). 262–267 contributes to the NAD(+) binding site; that stretch reads GSTEVG. The active-site Proton acceptor is the Glu285. Cys319 acts as the Nucleophile in catalysis. N6-acetyllysine; alternate occurs at positions 364, 383, 399, 414, and 426. 5 positions are modified to N6-succinyllysine; alternate: Lys364, Lys383, Lys399, Lys414, and Lys426. At Lys429 the chain carries N6-acetyllysine.

Belongs to the aldehyde dehydrogenase family. Homotetramer. In terms of tissue distribution, liver, testis and to a lesser extent in brain.

Its subcellular location is the mitochondrion matrix. The enzyme catalyses an aldehyde + NAD(+) + H2O = a carboxylate + NADH + 2 H(+). The protein operates within alcohol metabolism; ethanol degradation; acetate from ethanol: step 2/2. ALDHs play a major role in the detoxification of alcohol-derived acetaldehyde. They are involved in the metabolism of corticosteroids, biogenic amines, neurotransmitters, and lipid peroxidation. The sequence is that of Aldehyde dehydrogenase X, mitochondrial (ALDH1B1) from Homo sapiens (Human).